A 175-amino-acid polypeptide reads, in one-letter code: uncharacterized protein (175 aa).

2 helical membrane passes run 21–41 (IVLDFPSFLVGCVFTTMMGPI) and 50–70 (LVGLITVCKFLVIIGSIVFVI).

The protein localises to the membrane. This is an uncharacterized protein from Saccharomyces cerevisiae (strain ATCC 204508 / S288c) (Baker's yeast).